A 261-amino-acid chain; its full sequence is Triosephosphate isomerase (261 aa).

Residue 10 to 12 coordinates substrate; sequence NWK. Residue H100 is the Electrophile of the active site. Residue E172 is the Proton acceptor of the active site. Residues G178, S218, and 239–240 each bind substrate; that span reads GG.

Belongs to the triosephosphate isomerase family. In terms of assembly, homodimer.

The protein localises to the cytoplasm. The catalysed reaction is D-glyceraldehyde 3-phosphate = dihydroxyacetone phosphate. It participates in carbohydrate biosynthesis; gluconeogenesis. The protein operates within carbohydrate degradation; glycolysis; D-glyceraldehyde 3-phosphate from glycerone phosphate: step 1/1. In terms of biological role, involved in the gluconeogenesis. Catalyzes stereospecifically the conversion of dihydroxyacetone phosphate (DHAP) to D-glyceraldehyde-3-phosphate (G3P). The chain is Triosephosphate isomerase from Mycobacterium sp. (strain JLS).